The chain runs to 523 residues: GMP synthase [glutamine-hydrolyzing] (523 aa).

A Glutamine amidotransferase type-1 domain is found at 9-198; that stretch reads PVLVVDFGAQ…LTEIAGLEQN (190 aa). The active-site Nucleophile is the Cys86. Catalysis depends on residues His172 and Glu174. The 199-residue stretch at 199-397 folds into the GMPS ATP-PPase domain; that stretch reads WTAANIAEEL…LGLPEEIVGR (199 aa). Position 227–233 (227–233) interacts with ATP; it reads SGGVDSA.

Homodimer.

It carries out the reaction XMP + L-glutamine + ATP + H2O = GMP + L-glutamate + AMP + diphosphate + 2 H(+). It participates in purine metabolism; GMP biosynthesis; GMP from XMP (L-Gln route): step 1/1. In terms of biological role, catalyzes the synthesis of GMP from XMP. In Corynebacterium glutamicum (strain ATCC 13032 / DSM 20300 / JCM 1318 / BCRC 11384 / CCUG 27702 / LMG 3730 / NBRC 12168 / NCIMB 10025 / NRRL B-2784 / 534), this protein is GMP synthase [glutamine-hydrolyzing].